The sequence spans 437 residues: Amino-acid acetyltransferase (437 aa).

One can recognise an N-acetyltransferase domain in the interval Glu-289 to Lys-429.

Belongs to the acetyltransferase family. ArgA subfamily.

It localises to the cytoplasm. The enzyme catalyses L-glutamate + acetyl-CoA = N-acetyl-L-glutamate + CoA + H(+). It participates in amino-acid biosynthesis; L-arginine biosynthesis; N(2)-acetyl-L-ornithine from L-glutamate: step 1/4. The sequence is that of Amino-acid acetyltransferase from Actinobacillus pleuropneumoniae serotype 5b (strain L20).